We begin with the raw amino-acid sequence, 218 residues long: Superoxide dismutase [Mn], mitochondrial (218 aa).

Residues 1-21 (MLRFLSKNSVAAIRNVSIARG) constitute a mitochondrion transit peptide. Residues His-50 and His-96 each coordinate Mn(2+). The residue at position 129 (Ser-129) is a Phosphoserine. Asp-181 and His-185 together coordinate Mn(2+).

The protein belongs to the iron/manganese superoxide dismutase family. In terms of assembly, homodimer. It depends on Mn(2+) as a cofactor.

The protein localises to the mitochondrion matrix. The enzyme catalyses 2 superoxide + 2 H(+) = H2O2 + O2. Its function is as follows. Destroys superoxide anion radicals which are normally produced within the cells and which are toxic to biological systems. The chain is Superoxide dismutase [Mn], mitochondrial (sod2) from Schizosaccharomyces pombe (strain 972 / ATCC 24843) (Fission yeast).